A 583-amino-acid polypeptide reads, in one-letter code: Complement factor I (583 aa).

An N-terminal signal peptide occupies residues 1 to 18 (MKLLHVFLLFLCFHLRFC). 17 disulfide bridges follow: cysteine 33/cysteine 255, cysteine 43/cysteine 54, cysteine 48/cysteine 59, cysteine 61/cysteine 93, cysteine 67/cysteine 86, cysteine 75/cysteine 106, cysteine 141/cysteine 181, cysteine 154/cysteine 214, cysteine 186/cysteine 196, cysteine 229/cysteine 247, cysteine 241/cysteine 256, cysteine 259/cysteine 271, cysteine 266/cysteine 284, cysteine 278/cysteine 293, cysteine 327/cysteine 453, cysteine 365/cysteine 381, and cysteine 373/cysteine 444. One can recognise a Kazal-like domain in the interval 55 to 108 (IEGTCVCKLPYQCPKNGTAVCATNRRSFPTYCQQKSLECLHPGTKFLNNGTCTA). Asparagine 70 is a glycosylation site (N-linked (GlcNAc...) asparagine). Asparagine 103 carries an N-linked (GlcNAc...) (complex) asparagine glycan. In terms of domain architecture, SRCR spans 114 to 212 (VSLKHGNTDS…TMGYQDFADV (99 aa)). Asparagine 177 carries N-linked (GlcNAc...) asparagine glycosylation. 2 LDL-receptor class A domains span residues 213-257 (VCYT…LCCK) and 258-294 (ACQG…VGCA). The Ca(2+) site is built by lysine 239, aspartate 242, isoleucine 244, aspartate 246, aspartate 252, and glutamate 253. Residues tyrosine 276, asparagine 279, glutamate 281, aspartate 283, aspartate 289, and glutamate 290 each coordinate Ca(2+). The Peptidase S1 domain occupies 340–574 (IVGGKRAQLG…YFDWISYHVG (235 aa)). Residues histidine 380 and aspartate 429 each act as charge relay system in the active site. Residues asparagine 464 and asparagine 494 are each glycosylated (N-linked (GlcNAc...) asparagine). 3 disulfide bridges follow: cysteine 467–cysteine 531, cysteine 495–cysteine 510, and cysteine 521–cysteine 550. The Charge relay system role is filled by serine 525. Asparagine 536 carries an N-linked (GlcNAc...) asparagine glycan.

It belongs to the peptidase S1 family. Heterodimer of a light and heavy chains; disulfide-linked. The fully processed and mature protein circulates as a zymogen, and is allosterically activated by substrate-induced remodeling of the active site. Interacts with C3b. Interacts with complement factor H. In terms of assembly, (Microbial infection) Interacts with Staphylococcus aureus clumping factor A/ClfA; this interaction enhances cleavage of C3b into iC3b by CFI. Expressed in the liver by hepatocytes. Also present in other cells such as monocytes, fibroblasts or keratinocytes.

The protein resides in the secreted. It localises to the extracellular space. It carries out the reaction Inactivates complement subcomponents C3b, iC3b and C4b by proteolytic cleavage.. Trypsin-like serine protease that plays an essential role in regulating the immune response by controlling all complement pathways. Inhibits these pathways by cleaving three peptide bonds in the alpha-chain of C3b and two bonds in the alpha-chain of C4b thereby inactivating these proteins. Essential cofactors for these reactions include factor H and C4BP in the fluid phase and membrane cofactor protein/CD46 and CR1 on cell surfaces. The presence of these cofactors on healthy cells allows degradation of deposited C3b by CFI in order to prevent undesired complement activation, while in apoptotic cells or microbes, the absence of such cofactors leads to C3b-mediated complement activation and subsequent opsonization. This chain is Complement factor I (CFI), found in Homo sapiens (Human).